The sequence spans 248 residues: Homeobox protein CHOX-CAD (248 aa).

Residues Lys137–Asn196 constitute a DNA-binding region (homeobox). Residues Glu192 to Pro248 are disordered. Composition is skewed to low complexity over residues Gln201–Thr211 and Ser228–Leu240.

The protein belongs to the Caudal homeobox family.

The protein resides in the nucleus. Its function is as follows. May play an important role during the early steps of organogenesis. The polypeptide is Homeobox protein CHOX-CAD (CHOX-CAD1) (Gallus gallus (Chicken)).